Here is a 441-residue protein sequence, read N- to C-terminus: COP9 signalosome complex subunit 2 (441 aa).

Positions 1–23 (DMEDDFMCDDEEDYDLEYSEDSN) are enriched in acidic residues. Residues 1–29 (DMEDDFMCDDEEDYDLEYSEDSNSEPNVD) are disordered. The 163-residue stretch at 252–414 (AHTDFFEAFK…QLLELDHQKR (163 aa)) folds into the PCI domain.

The protein belongs to the CSN2 family. As to quaternary structure, component of the CSN complex, probably composed of cops1, cops2, cops3, cops4, cops5, cops6, cops7, cops8 and cops9.

It localises to the cytoplasm. It is found in the nucleus. In terms of biological role, essential component of the COP9 signalosome complex (CSN), a complex involved in various cellular and developmental processes. The CSN complex is an essential regulator of the ubiquitin (Ubl) conjugation pathway by mediating the deneddylation of the cullin subunits of E3 ligase complexes, leading to modify the Ubl ligase activity. The chain is COP9 signalosome complex subunit 2 (csn2) from Xenopus laevis (African clawed frog).